Consider the following 478-residue polypeptide: Divinyl ether synthase CYP74D3 (478 aa).

Residue Cys432 coordinates heme.

This sequence belongs to the cytochrome P450 family. 9-divinyl ether synthase subfamily. In terms of tissue distribution, not detected in leaves, stems or roots of healthy plants.

The protein localises to the cytoplasm. Its subcellular location is the cytosol. The enzyme catalyses (9S)-hydroperoxy-(10E,12Z)-octadecadienoate = colneleate + H2O. It carries out the reaction (9S)-hydroperoxy-(10E,12Z,15Z)-octadecatrienoate = colnelenate + H2O. In terms of biological role, strictly inducible cytochrome P450 involved in the biosynthesis of the anti-fungal toxins colneleate and colnelenate. Can use (9S)-hydroperoxy-(10E,12Z)-octadecadienoate (9-HPOD) and (9S)-hydroperoxy-(10E,12Z,15Z)-octadecatrienoate (9-HPOT) as substrates, but has a very low activity with the corresponding 13-hydroperoxides (13-HPOD and 13-POT). This is Divinyl ether synthase CYP74D3 from Nicotiana tabacum (Common tobacco).